A 362-amino-acid polypeptide reads, in one-letter code: Putative RING-H2 finger protein ATL21B (362 aa).

The first 23 residues, 1 to 23 (MIISKQLFLLFFLLFFIFPLRHA), serve as a signal peptide directing secretion. The helical transmembrane segment at 234 to 254 (VVAVLICLSIIGAVILFVTCI) threads the bilayer. The RING-type; atypical zinc finger occupies 316–358 (CPICLSEYVSKETVRFIPECDHCFHAKCIDVWLKIHGSCPLCR).

The protein belongs to the RING-type zinc finger family. ATL subfamily.

It localises to the membrane. It catalyses the reaction S-ubiquitinyl-[E2 ubiquitin-conjugating enzyme]-L-cysteine + [acceptor protein]-L-lysine = [E2 ubiquitin-conjugating enzyme]-L-cysteine + N(6)-ubiquitinyl-[acceptor protein]-L-lysine.. The protein operates within protein modification; protein ubiquitination. This is Putative RING-H2 finger protein ATL21B (ATL21B) from Arabidopsis thaliana (Mouse-ear cress).